The following is a 66-amino-acid chain: Ranalexin (66 aa).

A signal peptide spans 1 to 20 (MFTLKKSLLLLFFLGTINLS). A propeptide spans 21–44 (LCEEERNAEEERRDNPDERDVEVE) (small acidic peptide). C60 and C66 are oxidised to a cystine.

This sequence belongs to the frog skin active peptide (FSAP) family. Brevinin subfamily. As to expression, expressed by the skin dorsal glands.

The protein resides in the secreted. In terms of biological role, potent microbicidal activity, active against S.aureus and E.coli. It also acts as a membrane-disruptive agent at higher concentrations. The chain is Ranalexin from Aquarana catesbeiana (American bullfrog).